We begin with the raw amino-acid sequence, 81 residues long: MDPTIAAGALIGGGLIMAGGAIGAGIGDGIAGNALISGIARQPEAQGRLFTPFFITVGLVEAAYFINLAFMALFVFATPVG.

2 helical membrane-spanning segments follow: residues 5-25 (IAAG…IGAG) and 57-77 (VGLV…FVFA).

The protein belongs to the ATPase C chain family. As to quaternary structure, F-type ATPases have 2 components, F(1) - the catalytic core - and F(0) - the membrane proton channel. F(1) has five subunits: alpha(3), beta(3), gamma(1), delta(1), epsilon(1). F(0) has three main subunits: a(1), b(2) and c(10-14). The alpha and beta chains form an alternating ring which encloses part of the gamma chain. F(1) is attached to F(0) by a central stalk formed by the gamma and epsilon chains, while a peripheral stalk is formed by the delta and b chains.

The protein localises to the cell membrane. Functionally, f(1)F(0) ATP synthase produces ATP from ADP in the presence of a proton or sodium gradient. F-type ATPases consist of two structural domains, F(1) containing the extramembraneous catalytic core and F(0) containing the membrane proton channel, linked together by a central stalk and a peripheral stalk. During catalysis, ATP synthesis in the catalytic domain of F(1) is coupled via a rotary mechanism of the central stalk subunits to proton translocation. Key component of the F(0) channel; it plays a direct role in translocation across the membrane. A homomeric c-ring of between 10-14 subunits forms the central stalk rotor element with the F(1) delta and epsilon subunits. In Mycolicibacterium gilvum (strain PYR-GCK) (Mycobacterium gilvum (strain PYR-GCK)), this protein is ATP synthase subunit c.